We begin with the raw amino-acid sequence, 328 residues long: MKQVVYTASPNSRQIHVWSLNVEGGLSLLQTVDVPGEVQPMVINPDGKHLYVGIRPQFSIVTYAIGKNGSLEQKSIAPLPGSPTHISTDRAGRFLFSASYSFNNLSVHPIDDQGNVKAPIQIVENLQAPHSANIDRENRQLLVPCLKEDHIRIFNMDNQGYLVESHADAITTETGAGPRHMAFHPKKQAIYCINELDSTVDVLRKWEKYRIVQSVDSLPADFSSVRWSADIHMTPDGRHLYTSERSESLISHFRVSEEGYHLTLAGHYLTETQPRGFAIDHSGHFLIASGQKSDHISVSRIDKFSGELTQLARYPVGKSPMWVTILAL.

It belongs to the cycloisomerase 2 family.

The catalysed reaction is 6-phospho-D-glucono-1,5-lactone + H2O = 6-phospho-D-gluconate + H(+). The protein operates within carbohydrate degradation; pentose phosphate pathway; D-ribulose 5-phosphate from D-glucose 6-phosphate (oxidative stage): step 2/3. Catalyzes the hydrolysis of 6-phosphogluconolactone to 6-phosphogluconate. The protein is 6-phosphogluconolactonase of Xenorhabdus nematophila (strain ATCC 19061 / DSM 3370 / CCUG 14189 / LMG 1036 / NCIMB 9965 / AN6).